The sequence spans 89 residues: Cell division topological specificity factor (89 aa).

Belongs to the MinE family.

In terms of biological role, prevents the cell division inhibition by proteins MinC and MinD at internal division sites while permitting inhibition at polar sites. This ensures cell division at the proper site by restricting the formation of a division septum at the midpoint of the long axis of the cell. In Pectobacterium carotovorum subsp. carotovorum (strain PC1), this protein is Cell division topological specificity factor.